The sequence spans 44 residues: Mu-conotoxin-like Cal 12.1.3b (44 aa).

Intrachain disulfides connect Cys-3–Cys-16, Cys-11–Cys-28, Cys-18–Cys-33, and Cys-27–Cys-38. At Pro-23 the chain carries 4-hydroxyproline. Trp-36 and Trp-37 each carry 6'-bromotryptophan. 4-hydroxyproline is present on Pro-39. A 6'-bromotryptophan modification is found at Trp-43.

Expressed by the venom duct.

The protein localises to the secreted. In terms of biological role, mu-conotoxins block voltage-gated sodium channels. This toxin reversibly blocks voltage-gated sodium channel in cephalopods, with no alteration in the voltage dependence of sodium conductance or on the kinetics of inactivation. In Californiconus californicus (California cone), this protein is Mu-conotoxin-like Cal 12.1.3b.